Reading from the N-terminus, the 105-residue chain is Spermatogenesis-associated protein 8 (105 aa).

In terms of tissue distribution, expressed at high levels in adult testis, at moderate levels in sperm and at low levels in fetal testis. Not detected in other tissues.

The polypeptide is Spermatogenesis-associated protein 8 (SPATA8) (Homo sapiens (Human)).